We begin with the raw amino-acid sequence, 985 residues long: DNA ligase 4 (985 aa).

Disordered regions lie at residues 1–27 (MDRL…RNKH) and 43–70 (LNGN…QTLS). The segment covering 10 to 20 (ETERELDEKYP) has biased composition (basic and acidic residues). The segment covering 46 to 61 (NKKRPTGPAAARKKLG) has biased composition (basic residues). 10 residues coordinate ATP: Glu310, Lys312, Leu313, Arg317, Glu379, Phe420, Glu480, Lys485, Lys502, and Lys504. Lys312 acts as the N6-AMP-lysine intermediate in catalysis. Position 379 (Glu379) interacts with Mg(2+). Residue Glu480 coordinates Mg(2+). 2 BRCT domains span residues 711-804 (PSGH…PDLL) and 878-983 (LRGW…RFAP).

Belongs to the ATP-dependent DNA ligase family. Mg(2+) serves as cofactor.

It is found in the nucleus. The enzyme catalyses ATP + (deoxyribonucleotide)n-3'-hydroxyl + 5'-phospho-(deoxyribonucleotide)m = (deoxyribonucleotide)n+m + AMP + diphosphate.. Functionally, DNA ligase involved in DNA non-homologous end joining (NHEJ); required for double-strand break (DSB) repair. This chain is DNA ligase 4 (LIG4), found in Coccidioides immitis (strain RS) (Valley fever fungus).